We begin with the raw amino-acid sequence, 722 residues long: Probable C-mannosyltransferase DPY19L4 (722 aa).

Residues 1-34 (MAKEEGTSVEPRQRKKQRTSGSQEAKAEKIRRTP) form a disordered region. Alanine 2 carries the post-translational modification N-acetylalanine. A compositionally biased stretch (basic and acidic residues) spans 25–34 (AKAEKIRRTP). 12 helical membrane-spanning segments follow: residues 51–71 (IVIG…YLSA), 160–177 (VYFY…YVTA), 183–201 (WLMS…WFLI), 246–262 (FCYL…MMVW), 268–284 (VLFL…IFSV), 291–307 (YEVY…GYLL), 313–331 (ALLV…LVKC), 351–369 (FYLL…KMFV), 420–440 (LLPF…QVFF), 465–485 (IIYH…MEGL), 487–507 (FIWT…PELW), and 521–541 (PMLL…LSLW).

Belongs to the dpy-19 family.

It localises to the membrane. In terms of biological role, probable C-mannosyltransferase that mediates C-mannosylation of tryptophan residues on target proteins. The protein is Probable C-mannosyltransferase DPY19L4 (Dpy19l4) of Mus musculus (Mouse).